The sequence spans 380 residues: Cytochrome b (380 aa).

A run of 4 helical transmembrane segments spans residues 34–54 (FGSLLGICLMTQILTGLLLAT), 78–99 (WLIRNLHANGASFFFICIYLHI), 114–134 (WNTGVILLLTLMATAFVGYVL), and 179–199 (FFALHFLLPFMIAGLTTIHLT). Residues His84 and His98 each coordinate heme b. Heme b is bound by residues His183 and His197. An a ubiquinone-binding site is contributed by His202. Transmembrane regions (helical) follow at residues 227 to 247 (LKDILGFTLMLLPLTILALFS), 289 to 309 (LGGVLALAASVLILFLTPFLH), 321 to 341 (ISQLLFWILVTNLLILTWVGS), and 348 to 368 (FIIIGQLASITYFTILLILFP).

Belongs to the cytochrome b family. In terms of assembly, the cytochrome bc1 complex contains 11 subunits: 3 respiratory subunits (MT-CYB, CYC1 and UQCRFS1), 2 core proteins (UQCRC1 and UQCRC2) and 6 low-molecular weight proteins (UQCRH/QCR6, UQCRB/QCR7, UQCRQ/QCR8, UQCR10/QCR9, UQCR11/QCR10 and a cleavage product of UQCRFS1). This cytochrome bc1 complex then forms a dimer. The cofactor is heme b.

It is found in the mitochondrion inner membrane. Its function is as follows. Component of the ubiquinol-cytochrome c reductase complex (complex III or cytochrome b-c1 complex) that is part of the mitochondrial respiratory chain. The b-c1 complex mediates electron transfer from ubiquinol to cytochrome c. Contributes to the generation of a proton gradient across the mitochondrial membrane that is then used for ATP synthesis. This Pelecanoides magellani (Magellanic diving petrel) protein is Cytochrome b (MT-CYB).